The following is a 223-amino-acid chain: von Willebrand factor C domain-containing protein 2-like (223 aa).

The first 21 residues, 1–21 (MGPFLPAICVVLLALNAAVSP), serve as a signal peptide directing secretion. VWFC domains are found at residues 51–110 (KGCV…PECK) and 114–172 (NFCE…PICK).

It is found in the secreted. The protein localises to the synapse. May play a role in bone differentiation and matrix mineralization. May play a role in neural development. The chain is von Willebrand factor C domain-containing protein 2-like (vwc2l) from Danio rerio (Zebrafish).